We begin with the raw amino-acid sequence, 300 residues long: MSSQSSILVDFRPLATSFTGKYGSIQYCVRAVLERPQVPDQSVRRELQVVSHVDVNTPPLLTPMLKTQEKMVGCWLFTSGPVSLSVKIERKGYCNGEAIPIYAEIENCSSRLVVPKAAIFQTQTYLASGKTKTVRHMVANVRGNHIGSGSTDTWNGKMLKIPPVTPSILDCCIIRVYIHIPGAKKLMLELPLVIGTIPYSGFGRRNSSMASQFSMDMCWLALALPEQPEAPPNYADVVSEEEFSRHIPPYPQPSACDGEACYSMFACIQEFRFQPPPLYSESHAQLFCLQPVGPTNRAHF.

2 short sequence motifs (PPxY motif) span residues 231–234 and 276–279; these read PPNY and PPLY.

It belongs to the arrestin family. In terms of assembly, interacts with ADRB2. Interacts (via PPxY motifs) with ITCH, NEDD4L and WWP2. Interacts with AVPR2. Identified in a complex containing at least ARRDC4, AVPR2 and HGS. Interacts with SLC11A2; controls the incorporation of SLC11A2 into extracellular vesicles through an ubiquitination-dependent mechanism. Interacts with TRIM65.

It localises to the early endosome. It is found in the cell membrane. The protein localises to the cytoplasmic vesicle. Its function is as follows. Functions as an adapter recruiting ubiquitin-protein ligases to their specific substrates. Plays a role in endocytosis of activated G protein-coupled receptors (GPCRs) Through an ubiquitination-dependent mechanism also plays a role in the incorporation of SLC11A2 into extracellular vesicles. May play a role in glucose uptake. Participates in innate immune response by promoting IFIH1/MDA5 activation through interaction with TRIM65. This Rattus norvegicus (Rat) protein is Arrestin domain-containing protein 4 (Arrdc4).